The chain runs to 235 residues: Large ribosomal subunit protein uL1c (235 aa).

It belongs to the universal ribosomal protein uL1 family. Part of the 50S ribosomal subunit.

The protein localises to the plastid. The protein resides in the chloroplast. Its function is as follows. Binds directly to 23S rRNA. Might be involved in E site tRNA release (Potential). This Gracilaria tenuistipitata var. liui (Red alga) protein is Large ribosomal subunit protein uL1c (rpl1).